The chain runs to 462 residues: Probable Xaa-Pro aminopeptidase NECHADRAFT_60613 (462 aa).

The Mn(2+) site is built by Asp-259, Asp-270, Glu-393, and Glu-433.

The protein belongs to the peptidase M24B family. Requires Mn(2+) as cofactor.

The enzyme catalyses Release of any N-terminal amino acid, including proline, that is linked to proline, even from a dipeptide or tripeptide.. Its function is as follows. Catalyzes the removal of a penultimate prolyl residue from the N-termini of peptides. In Fusarium vanettenii (strain ATCC MYA-4622 / CBS 123669 / FGSC 9596 / NRRL 45880 / 77-13-4) (Fusarium solani subsp. pisi), this protein is Probable Xaa-Pro aminopeptidase NECHADRAFT_60613.